Reading from the N-terminus, the 325-residue chain is ATP synthase subunit gamma, mitochondrial (325 aa).

Residues 1-42 (MAMAVFRREGRRLLPSIAARPIAAIRSPLSSDQEEGLLGVRS) constitute a mitochondrion transit peptide.

This sequence belongs to the ATPase gamma chain family. As to quaternary structure, F-type ATPases have 2 components, CF(1) - the catalytic core - and CF(0) - the membrane proton channel. CF(1) has five subunits: alpha(3), beta(3), gamma(1), delta(1), epsilon(1). CF(0) has three main subunits: a, b and c.

It is found in the mitochondrion. The protein localises to the mitochondrion inner membrane. Its function is as follows. Mitochondrial membrane ATP synthase (F(1)F(0) ATP synthase or Complex V) produces ATP from ADP in the presence of a proton gradient across the membrane which is generated by electron transport complexes of the respiratory chain. F-type ATPases consist of two structural domains, F(1) - containing the extramembraneous catalytic core, and F(0) - containing the membrane proton channel, linked together by a central stalk and a peripheral stalk. During catalysis, ATP synthesis in the catalytic domain of F(1) is coupled via a rotary mechanism of the central stalk subunits to proton translocation. Part of the complex F(1) domain and the central stalk which is part of the complex rotary element. The gamma subunit protrudes into the catalytic domain formed of alpha(3)beta(3). Rotation of the central stalk against the surrounding alpha(3)beta(3) subunits leads to hydrolysis of ATP in three separate catalytic sites on the beta subunits. In Arabidopsis thaliana (Mouse-ear cress), this protein is ATP synthase subunit gamma, mitochondrial (ATPC).